We begin with the raw amino-acid sequence, 199 residues long: Peroxiredoxin-2 (199 aa).

In terms of domain architecture, Thioredoxin spans 7-165 (AHVGKPAPEF…ALRLVQAFQY (159 aa)). C52 functions as the Cysteine sulfenic acid (-SOH) intermediate in the catalytic mechanism. At S113 the chain carries Phosphoserine. T183 carries the phosphothreonine modification. An N6-acetyllysine modification is found at K197.

Belongs to the peroxiredoxin family. AhpC/Prx1 subfamily. Homodimer; disulfide-linked, upon oxidation. 5 homodimers assemble to form a ring-like decamer. Interacts with TIPIN. The enzyme can be inactivated by further oxidation of the cysteine sulfenic acid (C(P)-SOH) to sulphinic acid (C(P)-SO2H) instead of its condensation to a disulfide bond. It can be reactivated by forming a transient disulfide bond with sulfiredoxin SRXN1, which reduces the cysteine sulfinic acid in an ATP- and Mg-dependent manner. In terms of processing, acetylation increases resistance to transition to high molecular-mass complexes. Deacetylated by HDAC6 which decreases reducing activity.

It is found in the cytoplasm. It carries out the reaction a hydroperoxide + [thioredoxin]-dithiol = an alcohol + [thioredoxin]-disulfide + H2O. Thiol-specific peroxidase that catalyzes the reduction of hydrogen peroxide and organic hydroperoxides to water and alcohols, respectively. Plays a role in cell protection against oxidative stress by detoxifying peroxides and as sensor of hydrogen peroxide-mediated signaling events. Might participate in the signaling cascades of growth factors and tumor necrosis factor-alpha by regulating the intracellular concentrations of H(2)O(2). The sequence is that of Peroxiredoxin-2 (PRDX2) from Bos taurus (Bovine).